We begin with the raw amino-acid sequence, 1024 residues long: Probable alpha-mannosidase At5g13980 (1024 aa).

The first 21 residues, 1 to 21 (MDLAKFLCWIVLLLGISLVES), serve as a signal peptide directing secretion. An N-linked (GlcNAc...) asparagine glycan is attached at asparagine 27. The Zn(2+) site is built by histidine 46 and aspartate 48. An N-linked (GlcNAc...) asparagine glycan is attached at asparagine 63. Aspartate 168 is a binding site for Zn(2+). Asparagine 278 carries an N-linked (GlcNAc...) asparagine glycan. Histidine 410 is a Zn(2+) binding site. An intrachain disulfide couples cysteine 461 to cysteine 469. 6 N-linked (GlcNAc...) asparagine glycosylation sites follow: asparagine 465, asparagine 475, asparagine 637, asparagine 658, asparagine 733, and asparagine 823. Cysteine 827 and cysteine 832 are oxidised to a cystine.

Belongs to the glycosyl hydrolase 38 family. As to quaternary structure, homodimer. The cofactor is Zn(2+).

It catalyses the reaction Hydrolysis of terminal, non-reducing alpha-D-mannose residues in alpha-D-mannosides.. Its function is as follows. Liberates mannose from p-nitrophenyl-alpha-D-mannoside in vitro. The sequence is that of Probable alpha-mannosidase At5g13980 from Arabidopsis thaliana (Mouse-ear cress).